The sequence spans 753 residues: 5-methyltetrahydropteroyltriglutamate--homocysteine methyltransferase (753 aa).

5-methyltetrahydropteroyltri-L-glutamate is bound by residues 17–20 (RELK) and Lys117. Residues 431–433 (IGS) and Glu484 contribute to the L-homocysteine site. L-methionine contacts are provided by residues 431 to 433 (IGS) and Glu484. 5-methyltetrahydropteroyltri-L-glutamate-binding positions include 515-516 (RC) and Trp561. Position 599 (Asp599) interacts with L-homocysteine. Asp599 serves as a coordination point for L-methionine. Glu605 provides a ligand contact to 5-methyltetrahydropteroyltri-L-glutamate. Residues His641, Cys643, and Glu665 each coordinate Zn(2+). His694 functions as the Proton donor in the catalytic mechanism. Residue Cys726 coordinates Zn(2+).

Belongs to the vitamin-B12 independent methionine synthase family. It depends on Zn(2+) as a cofactor.

The catalysed reaction is 5-methyltetrahydropteroyltri-L-glutamate + L-homocysteine = tetrahydropteroyltri-L-glutamate + L-methionine. Its pathway is amino-acid biosynthesis; L-methionine biosynthesis via de novo pathway; L-methionine from L-homocysteine (MetE route): step 1/1. Catalyzes the transfer of a methyl group from 5-methyltetrahydrofolate to homocysteine resulting in methionine formation. The sequence is that of 5-methyltetrahydropteroyltriglutamate--homocysteine methyltransferase from Escherichia coli (strain UTI89 / UPEC).